The chain runs to 196 residues: Penicillin-binding protein activator LpoB (196 aa).

The signal sequence occupies residues 1–16 (MKKYLGIVLMALVIAG). Cys-17 carries the N-palmitoyl cysteine lipid modification. Cys-17 carries S-diacylglycerol cysteine lipidation. Residues 24 to 54 (TEQPATIEPAVPTPSKPQLPPSESQPLPTPP) are disordered. Residues 34 to 43 (VPTPSKPQLP) show a composition bias toward pro residues.

This sequence belongs to the LpoB family. As to quaternary structure, interacts with PBP1b.

The protein resides in the cell outer membrane. Its function is as follows. Regulator of peptidoglycan synthesis that is essential for the function of penicillin-binding protein 1B (PBP1b). In Dickeya dadantii (strain 3937) (Erwinia chrysanthemi (strain 3937)), this protein is Penicillin-binding protein activator LpoB.